We begin with the raw amino-acid sequence, 586 residues long: Urease subunit alpha (586 aa).

Residues 134–586 (GAIDTHIHFI…LPMAQRYFLF (453 aa)) form the Urease domain. Ni(2+)-binding residues include H139, H141, and K222. K222 is modified (N6-carboxylysine). H224 provides a ligand contact to substrate. Positions 251 and 277 each coordinate Ni(2+). The Proton donor role is filled by H325. D365 is a binding site for Ni(2+).

It belongs to the metallo-dependent hydrolases superfamily. Urease alpha subunit family. In terms of assembly, heterotrimer of UreA (gamma), UreB (beta) and UreC (alpha) subunits. Three heterotrimers associate to form the active enzyme. Ni cation serves as cofactor. In terms of processing, carboxylation allows a single lysine to coordinate two nickel ions.

The protein localises to the cytoplasm. The catalysed reaction is urea + 2 H2O + H(+) = hydrogencarbonate + 2 NH4(+). The protein operates within nitrogen metabolism; urea degradation; CO(2) and NH(3) from urea (urease route): step 1/1. The chain is Urease subunit alpha from Gloeothece citriformis (strain PCC 7424) (Cyanothece sp. (strain PCC 7424)).